A 361-amino-acid polypeptide reads, in one-letter code: Phosphoserine aminotransferase (361 aa).

Residue arginine 42 participates in L-glutamate binding. Pyridoxal 5'-phosphate is bound by residues alanine 76 to arginine 77, tryptophan 102, threonine 153, aspartate 173, and glutamine 196. Lysine 197 bears the N6-(pyridoxal phosphate)lysine mark. Asparagine 238–threonine 239 lines the pyridoxal 5'-phosphate pocket.

It belongs to the class-V pyridoxal-phosphate-dependent aminotransferase family. SerC subfamily. In terms of assembly, homodimer. Pyridoxal 5'-phosphate serves as cofactor.

The protein localises to the cytoplasm. It catalyses the reaction O-phospho-L-serine + 2-oxoglutarate = 3-phosphooxypyruvate + L-glutamate. It carries out the reaction 4-(phosphooxy)-L-threonine + 2-oxoglutarate = (R)-3-hydroxy-2-oxo-4-phosphooxybutanoate + L-glutamate. It functions in the pathway amino-acid biosynthesis; L-serine biosynthesis; L-serine from 3-phospho-D-glycerate: step 2/3. The protein operates within cofactor biosynthesis; pyridoxine 5'-phosphate biosynthesis; pyridoxine 5'-phosphate from D-erythrose 4-phosphate: step 3/5. In terms of biological role, catalyzes the reversible conversion of 3-phosphohydroxypyruvate to phosphoserine and of 3-hydroxy-2-oxo-4-phosphonooxybutanoate to phosphohydroxythreonine. The protein is Phosphoserine aminotransferase of Pectobacterium atrosepticum (strain SCRI 1043 / ATCC BAA-672) (Erwinia carotovora subsp. atroseptica).